We begin with the raw amino-acid sequence, 425 residues long: Riboflavin biosynthesis protein RibBA (425 aa).

Residues 1 to 204 (MTRLDSVERA…IADLIEWRRK (204 aa)) form a DHBP synthase region. D-ribulose 5-phosphate-binding positions include 28-29 (RE), D33, 141-145 (RPGHT), and E165. A Mg(2+)-binding site is contributed by E29. Mg(2+) is bound at residue H144. Residues 205 to 425 (HEKHIERVAE…HLPGEFGGAL (221 aa)) are GTP cyclohydrolase II. 259-263 (RVHSE) contributes to the GTP binding site. Zn(2+) is bound by residues C264, C275, and C277. Residues Q280, 303 to 305 (EGR), and T325 each bind GTP. D337 acts as the Proton acceptor; for GTP cyclohydrolase activity in catalysis. R339 serves as the catalytic Nucleophile; for GTP cyclohydrolase activity. GTP-binding residues include T360 and K365.

The protein in the N-terminal section; belongs to the DHBP synthase family. It in the C-terminal section; belongs to the GTP cyclohydrolase II family. Mg(2+) serves as cofactor. Requires Mn(2+) as cofactor. It depends on Zn(2+) as a cofactor.

The enzyme catalyses D-ribulose 5-phosphate = (2S)-2-hydroxy-3-oxobutyl phosphate + formate + H(+). It carries out the reaction GTP + 4 H2O = 2,5-diamino-6-hydroxy-4-(5-phosphoribosylamino)-pyrimidine + formate + 2 phosphate + 3 H(+). It functions in the pathway cofactor biosynthesis; riboflavin biosynthesis; 2-hydroxy-3-oxobutyl phosphate from D-ribulose 5-phosphate: step 1/1. It participates in cofactor biosynthesis; riboflavin biosynthesis; 5-amino-6-(D-ribitylamino)uracil from GTP: step 1/4. Functionally, catalyzes the conversion of D-ribulose 5-phosphate to formate and 3,4-dihydroxy-2-butanone 4-phosphate. Catalyzes the conversion of GTP to 2,5-diamino-6-ribosylamino-4(3H)-pyrimidinone 5'-phosphate (DARP), formate and pyrophosphate. The polypeptide is Riboflavin biosynthesis protein RibBA (Mycobacterium ulcerans (strain Agy99)).